We begin with the raw amino-acid sequence, 86 residues long: Large ribosomal subunit protein bL27 (86 aa).

Residues 1-10 (MAQKKGGGST) show a composition bias toward gly residues. Positions 1 to 21 (MAQKKGGGSTRNGRDSESKRL) are disordered.

It belongs to the bacterial ribosomal protein bL27 family.

The polypeptide is Large ribosomal subunit protein bL27 (Cupriavidus pinatubonensis (strain JMP 134 / LMG 1197) (Cupriavidus necator (strain JMP 134))).